A 252-amino-acid polypeptide reads, in one-letter code: Diphthine synthase (252 aa).

S-adenosyl-L-methionine-binding positions include Leu9, Asp85, Val88, 113–114 (SI), Leu165, Ala204, and His229.

This sequence belongs to the diphthine synthase family. In terms of assembly, homodimer.

It carries out the reaction 2-[(3S)-amino-3-carboxypropyl]-L-histidyl-[translation elongation factor 2] + 3 S-adenosyl-L-methionine = diphthine-[translation elongation factor 2] + 3 S-adenosyl-L-homocysteine + 3 H(+). It participates in protein modification; peptidyl-diphthamide biosynthesis. In terms of biological role, S-adenosyl-L-methionine-dependent methyltransferase that catalyzes the trimethylation of the amino group of the modified target histidine residue in translation elongation factor 2 (EF-2), to form an intermediate called diphthine. The three successive methylation reactions represent the second step of diphthamide biosynthesis. The chain is Diphthine synthase from Methanocorpusculum labreanum (strain ATCC 43576 / DSM 4855 / Z).